Here is a 200-residue protein sequence, read N- to C-terminus: Holliday junction branch migration complex subunit RuvA (200 aa).

The domain I stretch occupies residues 1–64 (MITSIQGTLV…EDSQTLYGFA (64 aa)). Residues 65–144 (SPAERDFFRL…ATGAAPGLAT (80 aa)) are domain II. The tract at residues 145-151 (QPAAAAS) is flexible linker. The tract at residues 152 to 200 (PGASAHRDAVAALVALGYRSADADEAVRRASLALGEAATTESLIKKALS) is domain III.

It belongs to the RuvA family. Homotetramer. Forms an RuvA(8)-RuvB(12)-Holliday junction (HJ) complex. HJ DNA is sandwiched between 2 RuvA tetramers; dsDNA enters through RuvA and exits via RuvB. An RuvB hexamer assembles on each DNA strand where it exits the tetramer. Each RuvB hexamer is contacted by two RuvA subunits (via domain III) on 2 adjacent RuvB subunits; this complex drives branch migration. In the full resolvosome a probable DNA-RuvA(4)-RuvB(12)-RuvC(2) complex forms which resolves the HJ.

It localises to the cytoplasm. In terms of biological role, the RuvA-RuvB-RuvC complex processes Holliday junction (HJ) DNA during genetic recombination and DNA repair, while the RuvA-RuvB complex plays an important role in the rescue of blocked DNA replication forks via replication fork reversal (RFR). RuvA specifically binds to HJ cruciform DNA, conferring on it an open structure. The RuvB hexamer acts as an ATP-dependent pump, pulling dsDNA into and through the RuvAB complex. HJ branch migration allows RuvC to scan DNA until it finds its consensus sequence, where it cleaves and resolves the cruciform DNA. The sequence is that of Holliday junction branch migration complex subunit RuvA from Opitutus terrae (strain DSM 11246 / JCM 15787 / PB90-1).